The sequence spans 246 residues: Pyridoxine 5'-phosphate synthase (246 aa).

Asn-12 contacts 3-amino-2-oxopropyl phosphate. Position 14-15 (14-15) interacts with 1-deoxy-D-xylulose 5-phosphate; that stretch reads DH. Arg-23 contacts 3-amino-2-oxopropyl phosphate. His-48 (proton acceptor) is an active-site residue. The 1-deoxy-D-xylulose 5-phosphate site is built by Arg-50 and His-55. Glu-75 functions as the Proton acceptor in the catalytic mechanism. Thr-105 provides a ligand contact to 1-deoxy-D-xylulose 5-phosphate. The Proton donor role is filled by His-196. 3-amino-2-oxopropyl phosphate is bound by residues Gly-197 and 218–219; that span reads GH.

This sequence belongs to the PNP synthase family. Homooctamer; tetramer of dimers.

The protein resides in the cytoplasm. The enzyme catalyses 3-amino-2-oxopropyl phosphate + 1-deoxy-D-xylulose 5-phosphate = pyridoxine 5'-phosphate + phosphate + 2 H2O + H(+). The protein operates within cofactor biosynthesis; pyridoxine 5'-phosphate biosynthesis; pyridoxine 5'-phosphate from D-erythrose 4-phosphate: step 5/5. Its function is as follows. Catalyzes the complicated ring closure reaction between the two acyclic compounds 1-deoxy-D-xylulose-5-phosphate (DXP) and 3-amino-2-oxopropyl phosphate (1-amino-acetone-3-phosphate or AAP) to form pyridoxine 5'-phosphate (PNP) and inorganic phosphate. This Pseudomonas syringae pv. tomato (strain ATCC BAA-871 / DC3000) protein is Pyridoxine 5'-phosphate synthase.